The following is a 602-amino-acid chain: Myotubularin (602 aa).

Residues 1–32 (MASNSTPKYNSNSLENSLRRSPGDGMNHEQND) form a disordered region. Residues 17–31 (SLRRSPGDGMNHEQN) show a composition bias toward basic and acidic residues. The region spanning 28–96 (HEQNDEIPCL…GVIARIEKMG (69 aa)) is the GRAM domain. One can recognise a Myotubularin phosphatase domain in the interval 162-537 (GWAVYDAMTE…RHLELWVNYY (376 aa)). Asparagine 287, asparagine 312, and isoleucine 313 together coordinate a 1,2-diacyl-sn-glycero-3-phospho-(1D-myo-inositol-3,5-bisphosphate). Residues asparagine 287, asparagine 312, and isoleucine 313 each contribute to the a 1,2-diacyl-sn-glycero-3-phospho-(1D-myo-inositol-3-phosphate) site. Residue cysteine 374 is the Phosphocysteine intermediate of the active site. A 1,2-diacyl-sn-glycero-3-phospho-(1D-myo-inositol-3,5-bisphosphate) is bound by residues serine 375, aspartate 376, glycine 377, tryptophan 378, aspartate 379, arginine 380, lysine 416, and arginine 420. Residues serine 375, aspartate 376, glycine 377, tryptophan 378, aspartate 379, and arginine 380 each coordinate a 1,2-diacyl-sn-glycero-3-phospho-(1D-myo-inositol-3-phosphate). A 1,2-diacyl-sn-glycero-3-phospho-(1D-myo-inositol-3-phosphate) is bound at residue arginine 420. The segment at 574-602 (QITNSPKMNSSTTSPSSPSQIMPQVHTPF) is disordered. Residues 583 to 592 (SSTTSPSSPS) are compositionally biased toward low complexity.

Belongs to the protein-tyrosine phosphatase family. Non-receptor class myotubularin subfamily.

It localises to the cytoplasm. Its subcellular location is the cell membrane. The protein resides in the cell projection. The protein localises to the filopodium. It is found in the ruffle. It localises to the late endosome. Its subcellular location is the myofibril. The protein resides in the sarcomere. The enzyme catalyses a 1,2-diacyl-sn-glycero-3-phospho-(1D-myo-inositol-3-phosphate) + H2O = a 1,2-diacyl-sn-glycero-3-phospho-(1D-myo-inositol) + phosphate. It carries out the reaction a 1,2-diacyl-sn-glycero-3-phospho-(1D-myo-inositol-3,5-bisphosphate) + H2O = a 1,2-diacyl-sn-glycero-3-phospho-(1D-myo-inositol-5-phosphate) + phosphate. The catalysed reaction is 1,2-dioctanoyl-sn-glycero-3-phospho-(1-D-myo-inositol-3-phosphate) + H2O = 1,2-dioctanoyl-sn-glycero-3-phospho-(1D-myo-inositol) + phosphate. It catalyses the reaction 1,2-dioctanoyl-sn-glycero-3-phospho-(1D-myo-inositol-3,5-bisphosphate) + H2O = 1,2-dioctanoyl-sn-glycero-3-phospho-(1D-myo-inositol-5-phosphate) + phosphate. The enzyme catalyses 1,2-dihexadecanoyl-sn-glycero-3-phospho-(1D-myo-inositol-3,5-phosphate) + H2O = 1,2-dihexadecanoyl-sn-glycero-3-phospho-(1D-myo-inositol-5-phosphate) + phosphate. Lipid phosphatase which dephosphorylates phosphatidylinositol 3-monophosphate (PI3P) and phosphatidylinositol 3,5-bisphosphate (PI(3,5)P2). The protein is Myotubularin (mtm1) of Xenopus tropicalis (Western clawed frog).